The following is a 163-amino-acid chain: Putative pre-16S rRNA nuclease (163 aa).

It belongs to the YqgF nuclease family.

Its subcellular location is the cytoplasm. Could be a nuclease involved in processing of the 5'-end of pre-16S rRNA. The protein is Putative pre-16S rRNA nuclease of Roseobacter denitrificans (strain ATCC 33942 / OCh 114) (Erythrobacter sp. (strain OCh 114)).